We begin with the raw amino-acid sequence, 156 residues long: Calglandulin (156 aa).

EF-hand domains are found at residues 8–43, 44–79, 82–117, and 118–153; these read EQIT…IGIN, PTKR…YHEK, NQDE…AGEP, and LNEH…ESFK. The Ca(2+) site is built by Asp131, Asp133, Asp135, Thr137, and Glu142.

It belongs to the calmodulin family. Calglandulin subfamily. Expressed by the venom gland.

The protein localises to the cytoplasm. In terms of biological role, may be involved in the cellular control mechanism of the secretion of toxins from the gland into the venom. The chain is Calglandulin from Hoplocephalus stephensii (Stephens's banded snake).